We begin with the raw amino-acid sequence, 381 residues long: Queuine tRNA-ribosyltransferase (381 aa).

Catalysis depends on Asp96, which acts as the Proton acceptor. Substrate contacts are provided by residues 96 to 100 (DSGGF), Asp150, Gln193, and Gly220. The segment at 251-257 (GVGSPDA) is RNA binding. Asp270 acts as the Nucleophile in catalysis. Residues 275-279 (TRIAR) are RNA binding; important for wobble base 34 recognition. 4 residues coordinate Zn(2+): Cys308, Cys310, Cys313, and His339.

Belongs to the queuine tRNA-ribosyltransferase family. Homodimer. Within each dimer, one monomer is responsible for RNA recognition and catalysis, while the other monomer binds to the replacement base PreQ1. The cofactor is Zn(2+).

It carries out the reaction 7-aminomethyl-7-carbaguanine + guanosine(34) in tRNA = 7-aminomethyl-7-carbaguanosine(34) in tRNA + guanine. The protein operates within tRNA modification; tRNA-queuosine biosynthesis. Catalyzes the base-exchange of a guanine (G) residue with the queuine precursor 7-aminomethyl-7-deazaguanine (PreQ1) at position 34 (anticodon wobble position) in tRNAs with GU(N) anticodons (tRNA-Asp, -Asn, -His and -Tyr). Catalysis occurs through a double-displacement mechanism. The nucleophile active site attacks the C1' of nucleotide 34 to detach the guanine base from the RNA, forming a covalent enzyme-RNA intermediate. The proton acceptor active site deprotonates the incoming PreQ1, allowing a nucleophilic attack on the C1' of the ribose to form the product. After dissociation, two additional enzymatic reactions on the tRNA convert PreQ1 to queuine (Q), resulting in the hypermodified nucleoside queuosine (7-(((4,5-cis-dihydroxy-2-cyclopenten-1-yl)amino)methyl)-7-deazaguanosine). In Bacillus velezensis (strain DSM 23117 / BGSC 10A6 / LMG 26770 / FZB42) (Bacillus amyloliquefaciens subsp. plantarum), this protein is Queuine tRNA-ribosyltransferase.